Here is an 852-residue protein sequence, read N- to C-terminus: Zinc finger and SCAN domain-containing protein 29 (852 aa).

One can recognise an SCAN box domain in the interval 18-100 (RQRFRRFHYQ…TLVEDLEREP (83 aa)). 3 disordered regions span residues 96 to 182 (LERE…PKSG), 347 to 400 (ASHS…SAAP), and 502 to 557 (PNDG…RAPV). K112 is covalently cross-linked (Glycyl lysine isopeptide (Lys-Gly) (interchain with G-Cter in SUMO2)). Residue S153 is modified to Phosphoserine. K180 participates in a covalent cross-link: Glycyl lysine isopeptide (Lys-Gly) (interchain with G-Cter in SUMO2). The span at 508 to 517 (ETASCPVQGT) shows a compositional bias: polar residues. Positions 528-545 (EADEATEEDSDDDEEDTE) are enriched in acidic residues. At S561 the chain carries Phosphoserine. A Glycyl lysine isopeptide (Lys-Gly) (interchain with G-Cter in SUMO2) cross-link involves residue K576. The tract at residues 603–625 (QGKGNESDCRSGRQWAKTSGEKR) is disordered. A Glycyl lysine isopeptide (Lys-Gly) (interchain with G-Cter in SUMO2) cross-link involves residue K652. C2H2-type zinc fingers lie at residues 678-700 (YKCADCGKSFSRSARLIRHRRIH), 706-728 (YKCLDCGKSFRDSSNFITHRRIH), 734-756 (YQCGECGKCFNQSSSLIIHQRTH), 762-784 (YQCEECGKSFNNSSHFSAHRRIH), 790-812 (HVCPDCGKSFSKSSDLRAHHRTH), and 818-840 (YGCHDCGKCFSKSSALNKHGEIH).

It belongs to the krueppel C2H2-type zinc-finger protein family.

It localises to the nucleus. May be involved in transcriptional regulation. The sequence is that of Zinc finger and SCAN domain-containing protein 29 (ZSCAN29) from Homo sapiens (Human).